Consider the following 714-residue polypeptide: Interferon-induced GTP-binding protein Mx2 (714 aa).

The tract at residues methionine 1–leucine 89 is disordered. 2 stretches are compositionally biased toward polar residues: residues asparagine 61 to proline 70 and glutamine 79 to asparagine 88. In terms of domain architecture, Dynamin-type G spans aspartate 115–proline 386. The tract at residues glycine 125–serine 132 is G1 motif. Glycine 125 to serine 132 contacts GTP. Residues isoleucine 150–arginine 152 are G2 motif. Positions aspartate 224–glycine 227 are G3 motif. GTP-binding positions include aspartate 224–isoleucine 228 and threonine 293–aspartate 296. A G4 motif region spans residues threonine 293 to aspartate 296. The G5 motif stretch occupies residues lysine 325 to glycine 328. In terms of domain architecture, GED spans isoleucine 622 to serine 713.

This sequence belongs to the TRAFAC class dynamin-like GTPase superfamily. Dynamin/Fzo/YdjA family.

Its subcellular location is the cytoplasm. It localises to the nucleus. Its function is as follows. Interferon-induced dynamin-like GTPase with antiviral activity. The chain is Interferon-induced GTP-binding protein Mx2 (MX2) from Ovis aries (Sheep).